The following is a 188-amino-acid chain: Guanylate kinase (188 aa).

A Guanylate kinase-like domain is found at 8-188; it reads GRIVVLAGPS…AVAAISEILR (181 aa). 15-22 contributes to the ATP binding site; it reads GPSAVGKS.

The protein belongs to the guanylate kinase family.

Its subcellular location is the cytoplasm. The enzyme catalyses GMP + ATP = GDP + ADP. Functionally, essential for recycling GMP and indirectly, cGMP. This Corynebacterium jeikeium (strain K411) protein is Guanylate kinase.